Reading from the N-terminus, the 126-residue chain is LTPIISVQFKPPPTRDFPVVVEKGFEKRAHYFRGFINSGHAQIQKGQTHHHGHMTFAWRQGLDTDTIRHRILNVHIGPCIYSVPPPLDRSHESPEEFFPPQNRNRGGGPKAQIQRHPPEALEKTTH.

A disordered region spans residues 83-126 (VPPPLDRSHESPEEFFPPQNRNRGGGPKAQIQRHPPEALEKTTH). A compositionally biased stretch (basic and acidic residues) spans 116 to 126 (HPPEALEKTTH).

This is an uncharacterized protein from Galliformes (FAdV-1).